A 212-amino-acid polypeptide reads, in one-letter code: Nucleoredoxin-like protein 1 (212 aa).

A Thioredoxin domain is found at 1–164; sequence MASLFSGRIL…AAEVLDRNFQ (164 aa). The tract at residues 191 to 212 is disordered; that stretch reads AARGGRDPGGGGGEEGGAGGLF. A compositionally biased stretch (gly residues) spans 197-212; the sequence is DPGGGGGEEGGAGGLF.

It belongs to the nucleoredoxin family. In terms of assembly, interacts with isoform 1 of BSG.

It localises to the cell projection. The protein localises to the cilium. It is found in the photoreceptor outer segment. Functionally, plays an important role in retinal cone photoreceptor survival. In association with glucose transporter SLC16A1/GLUT1 and BSG, promotes retinal cone survival by enhancing aerobic glycolysis and accelerating the entry of glucose into photoreceptors. May play a role in cone cell viability, slowing down cone degeneration, does not seem to play a role in degenerating rods. This Homo sapiens (Human) protein is Nucleoredoxin-like protein 1 (NXNL1).